Here is a 138-residue protein sequence, read N- to C-terminus: Secreted RxLR effector protein 51 (138 aa).

Residues 1–19 (MRSSTILFVLGVAMVAVNG) form the signal peptide. The short motif at 38–53 (RLLRSNSGKHKTDEER) is the RxLR-dEER element. Residue N101 is glycosylated (N-linked (GlcNAc...) asparagine).

This sequence belongs to the RxLR effector family.

It localises to the secreted. It is found in the host nucleus. Secreted effector that completely suppresses the host cell death induced by cell death-inducing proteins. In Plasmopara viticola (Downy mildew of grapevine), this protein is Secreted RxLR effector protein 51.